The sequence spans 123 residues: uncharacterized protein (123 aa).

Residues 35 to 100 are disordered; that stretch reads SQDHGDDPAE…SSGAPASQHC (66 aa). Residues 37–48 are compositionally biased toward basic and acidic residues; sequence DHGDDPAERGRT. Positions 85 to 97 are enriched in low complexity; it reads ALPASPSSGAPAS.

This is an uncharacterized protein from Homo sapiens (Human).